Here is a 249-residue protein sequence, read N- to C-terminus: Triosephosphate isomerase (249 aa).

A substrate-binding site is contributed by 9-11 (NWK). Residue histidine 95 is the Electrophile of the active site. Residue glutamate 166 is the Proton acceptor of the active site. Residues glycine 172, serine 211, and 232-233 (GG) each bind substrate.

The protein belongs to the triosephosphate isomerase family. As to quaternary structure, homodimer.

It localises to the cytoplasm. It catalyses the reaction D-glyceraldehyde 3-phosphate = dihydroxyacetone phosphate. It functions in the pathway carbohydrate biosynthesis; gluconeogenesis. Its pathway is carbohydrate degradation; glycolysis; D-glyceraldehyde 3-phosphate from glycerone phosphate: step 1/1. In terms of biological role, involved in the gluconeogenesis. Catalyzes stereospecifically the conversion of dihydroxyacetone phosphate (DHAP) to D-glyceraldehyde-3-phosphate (G3P). The sequence is that of Triosephosphate isomerase from Legionella pneumophila (strain Lens).